Consider the following 369-residue polypeptide: UDP-3-O-acylglucosamine N-acyltransferase (369 aa).

Catalysis depends on His263, which acts as the Proton acceptor.

It belongs to the transferase hexapeptide repeat family. LpxD subfamily. Homotrimer.

The enzyme catalyses a UDP-3-O-[(3R)-3-hydroxyacyl]-alpha-D-glucosamine + a (3R)-hydroxyacyl-[ACP] = a UDP-2-N,3-O-bis[(3R)-3-hydroxyacyl]-alpha-D-glucosamine + holo-[ACP] + H(+). It functions in the pathway bacterial outer membrane biogenesis; LPS lipid A biosynthesis. Its function is as follows. Catalyzes the N-acylation of UDP-3-O-acylglucosamine using 3-hydroxyacyl-ACP as the acyl donor. Is involved in the biosynthesis of lipid A, a phosphorylated glycolipid that anchors the lipopolysaccharide to the outer membrane of the cell. In Burkholderia ambifaria (strain MC40-6), this protein is UDP-3-O-acylglucosamine N-acyltransferase.